Reading from the N-terminus, the 872-residue chain is MSNVTPMMQQYLKIKSEYQDCLLFFRLGDFYEMFYEDAKEASRVLEITLTKRDAKKENPIPMCGVPYHSADSYIDTLVNNGYKVAICEQMEDPKQTKGMVRREVVRIVTPGTVMEQGGVDDKQNNYILSFVMNQPEIALSYCDVSTGELKVTHFNDEATLLNEITTINPNEVVINDNISDNLKRQINMVTETITVRETLSSEIYSVNQTEHKLMYQATQLLLDYIHHTQKRDLSHIEDVVQYAAIDYMKMDFYAKRNLELTESIRLKSKKGTLLWLMDETKTPMGARRLKQWIDRPLISKEQIEARLDIVDEFSAHFIERDTLRTYLNQVYDIERLVGRVSYGNVNARDLIQLKHSISEIPNIKALLNSMNQNTLVQVNQLEPLDDLLDILEQSLVEEPPISVKDGGLFKVGFNTQLDEYLEASKNGKTWLAELQAKERQRTGIKSLKISFNKVFGYFIEITRANLQNFEPSEFGYMRKQTLSNAERFITDELKEKEDIILGAEDKAIELEYQLFVQLREEVKKYTERLQQQAKIISELDCLQSFAEIAQKYNYTRPSFSENKTLELVESRHPVVERVMDYNDYVPNNCRLDNETFIYLITGPNMSGKSTYMRQVAIISIMAQMGAYVPCKEAVLPIFDQIFTRIGAADDLVSGKSTFMVEMLEAQKALTYATEDSLIIFDEIGRGTSTYDGLALAQAMIEYVAETSHAKTLFSTHYHELTTLDQALPSLKNVHVAANEYKGELIFLHKVKDGAVDDSYGIQVAKLADLPEKVISRAQVILSEFEASAGKKSSISNLKMVENEPEINQENLNLSVEETTDTLSQKDFEQASFDLFENDQESEIELQIKNLNLSNMTPIEALVKLSELQNQLK.

602–609 lines the ATP pocket; it reads GPNMSGKS.

This sequence belongs to the DNA mismatch repair MutS family.

Functionally, this protein is involved in the repair of mismatches in DNA. It is possible that it carries out the mismatch recognition step. This protein has a weak ATPase activity. The polypeptide is DNA mismatch repair protein MutS (Staphylococcus aureus (strain Mu3 / ATCC 700698)).